The chain runs to 274 residues: 2,3,4,5-tetrahydropyridine-2,6-dicarboxylate N-succinyltransferase (274 aa).

Positions 104 and 141 each coordinate substrate.

This sequence belongs to the transferase hexapeptide repeat family. Homotrimer.

The protein resides in the cytoplasm. It catalyses the reaction (S)-2,3,4,5-tetrahydrodipicolinate + succinyl-CoA + H2O = (S)-2-succinylamino-6-oxoheptanedioate + CoA. The protein operates within amino-acid biosynthesis; L-lysine biosynthesis via DAP pathway; LL-2,6-diaminopimelate from (S)-tetrahydrodipicolinate (succinylase route): step 1/3. In Escherichia coli O157:H7, this protein is 2,3,4,5-tetrahydropyridine-2,6-dicarboxylate N-succinyltransferase (dapD).